Reading from the N-terminus, the 415-residue chain is Squalene synthase 1 (415 aa).

The next 2 helical transmembrane spans lie at 281-301 (AIFR…ALCF) and 391-411 (LIAI…SNLL).

This sequence belongs to the phytoene/squalene synthase family. The cofactor is Mg(2+). Mn(2+) is required as a cofactor. As to expression, mostly expressed in the shoot apex (buds) and roots, and, to a lower extent, in stems, leaves, flowers and seeds.

It localises to the endoplasmic reticulum membrane. It catalyses the reaction 2 (2E,6E)-farnesyl diphosphate + NADH + H(+) = squalene + 2 diphosphate + NAD(+). The catalysed reaction is 2 (2E,6E)-farnesyl diphosphate + NADPH + H(+) = squalene + 2 diphosphate + NADP(+). It participates in terpene metabolism; lanosterol biosynthesis; lanosterol from farnesyl diphosphate: step 1/3. Component of the triterpene saponins (e.g. ginsenosides or panaxosides) and phytosterols biosynthetic pathways. Catalyzes the biosynthesis of squalene. In Panax ginseng (Korean ginseng), this protein is Squalene synthase 1.